The following is a 689-amino-acid chain: Beta-adrenergic receptor kinase 1 (689 aa).

Positions 1-190 (MADLEAVLAD…ELNIHLTMND (190 aa)) are N-terminal. The region spanning 54-175 (TFEKIFSQKL…IESEKFTRFC (122 aa)) is the RGS domain. The Protein kinase domain maps to 191 to 453 (FSVHRIIGRG…AQEVKEDPFF (263 aa)). Residues 197–205 (IGRGGFGEV) and Lys220 contribute to the ATP site. The active-site Proton acceptor is Asp317. Residues 454–521 (KAVDWQMVLL…TISERWQQEV (68 aa)) form the AGC-kinase C-terminal domain. The 95-residue stretch at 558-652 (DCIMHGYMSK…WKKELRDVYR (95 aa)) folds into the PH domain. The segment at 665–689 (KNKPRSPVVELSKMPLTQRGSANGL) is disordered. Phosphoserine is present on Ser670.

Belongs to the protein kinase superfamily. AGC Ser/Thr protein kinase family. GPRK subfamily. Interacts with the heterodimer formed by GNB1 and GNG2. Interacts with GIT1. Interacts with, and phosphorylates chemokine-stimulated CCR5. Interacts with ARRB1. Interacts with LPAR1 and LPAR2. Interacts with RALA in response to LPAR1 activation. ADRBK1 and RALA mutually inhibit each other's binding to LPAR1. Interacts with ADRB2.

The protein localises to the cytoplasm. It is found in the cell membrane. It localises to the postsynapse. Its subcellular location is the presynapse. It carries out the reaction [beta-adrenergic receptor] + ATP = [beta-adrenergic receptor]-phosphate + ADP + H(+). Its activity is regulated as follows. In contrast to other AGC family kinases, the catalytic activity is solely regulated by the binding of substrates and ligands, not by phosphorylation of the kinase domain. Its function is as follows. Specifically phosphorylates the agonist-occupied form of the beta-adrenergic and closely related receptors, probably inducing a desensitization of them. Does not act on HTR1B/5-hydroxytryptamine 1B receptor. Key regulator of LPAR1 signaling. Competes with RALA for binding to LPAR1 thus affecting the signaling properties of the receptor. Desensitizes LPAR1 and LPAR2 in a phosphorylation-independent manner. Inhibits relaxation of airway smooth muscle in response to blue light. In Didelphis virginiana (North American opossum), this protein is Beta-adrenergic receptor kinase 1.